A 146-amino-acid polypeptide reads, in one-letter code: Large ribosomal subunit protein uL15 (146 aa).

Over residues 1 to 13 (MKLHELKAAEGSR) the composition is skewed to basic and acidic residues. Positions 1-56 (MKLHELKAAEGSRRVRNRVGRGAATGNGKTSGRGQKGQKARSGGKLRPGFEGGQLP) are disordered. Residues 23–35 (AATGNGKTSGRGQ) are compositionally biased toward gly residues.

This sequence belongs to the universal ribosomal protein uL15 family. Part of the 50S ribosomal subunit.

In terms of biological role, binds to the 23S rRNA. In Staphylococcus epidermidis (strain ATCC 35984 / DSM 28319 / BCRC 17069 / CCUG 31568 / BM 3577 / RP62A), this protein is Large ribosomal subunit protein uL15.